A 1206-amino-acid chain; its full sequence is Translocase of chloroplast 132, chloroplastic (1206 aa).

Position 2 is an N-acetylglycine (Gly2). The stretch at 13-33 (REDKKLAEDRISDEQVVKNEL) forms a coiled coil. Disordered regions lie at residues 33 to 75 (LVRS…SDDL) and 97 to 119 (VGDLDETSSNEGGVKDFTAVGES). Acidic residues predominate over residues 39 to 49 (VRDDNEDEVFE). A Phosphoserine modification is found at Ser195. The segment at 233–499 (QTEQEVEEGE…TTTEADEHDE (267 aa)) is disordered. Residues 309 to 324 (AYTSNIVTNASGDNEV) show a composition bias toward polar residues. The span at 325–336 (SSAVTSSPLEES) shows a compositional bias: low complexity. A phosphoserine mark is found at Ser337, Ser363, and Ser398. Polar residues predominate over residues 357–379 (LASSPHSYPESTEVHSNSGSPGV). Residues 403–427 (KELEKQQSSRVHVDPEITENSHVET) are compositionally biased toward basic and acidic residues. A compositionally biased stretch (low complexity) spans 430–440 (EVVSSVSPTES). Positions 468–492 (APQQSRVNGNGSHNQFQQAEDSTTT) are enriched in polar residues. The AIG1-type G domain maps to 572–801 (DFSCTIMVLG…KLQDNIPGRP (230 aa)). Positions 581–588 (GKSGVGKS) are G1. GTP-binding positions include 584–589 (GVGKSA) and 603–608 (DAFQMG). Residue Ser588 coordinates Mg(2+). A homodimerization region spans residues 603-606 (DAFQ). The tract at residues 607–611 (MGTKR) is G2. The G3 stretch occupies residues 628 to 631 (DTPG). Residues 666 to 671 (RLDMQS) are homodimerization. A G4 region spans residues 700–703 (THAA). GTP contacts are provided by residues His701 and 749 to 750 (EN). The G5 stretch occupies residues 749-751 (ENH). The disordered stretch occupies residues 824–862 (QPKLPEQQYGDEEDEDDLEESSDSDEESEYDQLPPFKSL). Residues 832 to 853 (YGDEEDEDDLEESSDSDEESEY) are compositionally biased toward acidic residues. The chain crosses the membrane as a helical span at residues 1182–1199 (LAMVAIVPLFKKLLSYYY).

Belongs to the TRAFAC class TrmE-Era-EngA-EngB-Septin-like GTPase superfamily. AIG1/Toc34/Toc159-like paraseptin GTPase family. TOC159 subfamily. As to quaternary structure, homodimer. Part of the TOC core complex that includes 1 protein for the specific recognition of transit peptides surrounded by a ring composed of four proteins forming translocation channels, and four to five GTP-binding proteins providing energy. This core complex can interact with components of the TIC complex to form a larger import complex. Chloroplastic protein precursor such as prSS (precursor of the RuBisCO small subunit) interacts with these complexes. The TOC complex contains a specific subset of polar lipids such as digalactosyldiacylglyceride (DGDG), phosphatidylcholine (PC) and phosphatidylglycerol (PG). Requires Mg(2+) as cofactor. Post-translationally, phosphorylated by KOC1. Expressed in seedlings, leaves, flowers, and roots.

Its subcellular location is the plastid. The protein localises to the chloroplast outer membrane. The protein resides in the cytoplasm. GTPase involved in protein precursor import into chloroplasts. Seems to recognize chloroplast-destined precursor proteins and regulate their presentation to the translocation channel through GTP hydrolysis. Probably specialized in the import of nuclear encoded non-photosynthetic preproteins from the cytoplasm to the chloroplast. The chain is Translocase of chloroplast 132, chloroplastic from Arabidopsis thaliana (Mouse-ear cress).